A 258-amino-acid chain; its full sequence is Tryptophan synthase alpha chain (258 aa).

Active-site proton acceptor residues include Glu-47 and Asp-58.

Belongs to the TrpA family. In terms of assembly, tetramer of two alpha and two beta chains.

It carries out the reaction (1S,2R)-1-C-(indol-3-yl)glycerol 3-phosphate + L-serine = D-glyceraldehyde 3-phosphate + L-tryptophan + H2O. The protein operates within amino-acid biosynthesis; L-tryptophan biosynthesis; L-tryptophan from chorismate: step 5/5. In terms of biological role, the alpha subunit is responsible for the aldol cleavage of indoleglycerol phosphate to indole and glyceraldehyde 3-phosphate. In Bacillus cereus (strain ATCC 14579 / DSM 31 / CCUG 7414 / JCM 2152 / NBRC 15305 / NCIMB 9373 / NCTC 2599 / NRRL B-3711), this protein is Tryptophan synthase alpha chain.